A 730-amino-acid chain; its full sequence is Elongation factor 2 (730 aa).

The tr-type G domain occupies 19–260 (VMIRNIAIIA…MVIRFLPSPI (242 aa)). GTP-binding positions include 28-35 (AHIDHGKT), 94-98 (DTPGH), and 148-151 (NKVD). Position 596 is a diphthamide (H596).

It belongs to the TRAFAC class translation factor GTPase superfamily. Classic translation factor GTPase family. EF-G/EF-2 subfamily.

The protein resides in the cytoplasm. Catalyzes the GTP-dependent ribosomal translocation step during translation elongation. During this step, the ribosome changes from the pre-translocational (PRE) to the post-translocational (POST) state as the newly formed A-site-bound peptidyl-tRNA and P-site-bound deacylated tRNA move to the P and E sites, respectively. Catalyzes the coordinated movement of the two tRNA molecules, the mRNA and conformational changes in the ribosome. In Methanococcoides methylutens, this protein is Elongation factor 2 (fusA).